A 675-amino-acid chain; its full sequence is Calcium channel YVC1 (675 aa).

The Cytoplasmic segment spans residues 1-236; it reads MVSANGDLHL…PVRLKAPVYQ (236 aa). Residues 237–257 traverse the membrane as a helical segment; the sequence is NYLQMIFSFLFLGLYTLVVNG. Topologically, residues 258-295 are vacuolar; that stretch reads KDSERVQSFDLLESIFYVFNTGFILDELTKLYYIGYAH. The chain crosses the membrane as a helical span at residues 296–316; the sequence is LSFWNLFNDTTYLIITFAMGF. The Cytoplasmic portion of the chain corresponds to 317–335; sequence RAMSVTPLNAKYSSEDWDK. The helical transmembrane segment at 336 to 355 threads the bilayer; the sequence is ISYRVLSCAAPFVWSRLLLY. Over 356-376 the chain is Vacuolar; the sequence is LESQRFIGIMLVILKHMMKES. The helical transmembrane segment at 377-397 threads the bilayer; the sequence is IVFFFLLFLIMIGFTQGFLGL. Residues 398–405 lie on the Cytoplasmic side of the membrane; sequence DSADGKRD. A helical transmembrane segment spans residues 406 to 426; the sequence is ITGPILGNLTITVLGLGSFDV. At 427–436 the chain is on the vacuolar side; the sequence is FEEFAPPYAA. A helical transmembrane segment spans residues 437-457; sequence ILYYGYYFIVSVILLNILIAL. At 458–675 the chain is on the cytoplasmic side; it reads YSTAYQKVID…EKLDIKDKKE (218 aa). At Thr-636 the chain carries Phosphothreonine.

This sequence belongs to the transient receptor (TC 1.A.4) family.

Its subcellular location is the vacuole membrane. Required for release of calcium ions from the vacuole in response to hyperosmotic shock. This chain is Calcium channel YVC1, found in Saccharomyces cerevisiae (strain ATCC 204508 / S288c) (Baker's yeast).